The sequence spans 346 residues: Uroporphyrinogen decarboxylase (346 aa).

Substrate-binding positions include R23–R27, D72, Y155, S209, and H322.

The protein belongs to the uroporphyrinogen decarboxylase family. Homodimer.

It is found in the cytoplasm. The catalysed reaction is uroporphyrinogen III + 4 H(+) = coproporphyrinogen III + 4 CO2. The protein operates within porphyrin-containing compound metabolism; protoporphyrin-IX biosynthesis; coproporphyrinogen-III from 5-aminolevulinate: step 4/4. Its function is as follows. Catalyzes the decarboxylation of four acetate groups of uroporphyrinogen-III to yield coproporphyrinogen-III. The chain is Uroporphyrinogen decarboxylase from Anaeromyxobacter sp. (strain Fw109-5).